Consider the following 644-residue polypeptide: uncharacterized protein (644 aa).

The segment at 65 to 117 (DSDVETTGGGGRGSTTSTEDRIDEHDDAIEDDGVSNEEDENQDAEQEQEVDLN) is disordered. Residues 89-114 (HDDAIEDDGVSNEEDENQDAEQEQEV) are compositionally biased toward acidic residues.

This is an uncharacterized protein from Arabidopsis thaliana (Mouse-ear cress).